A 141-amino-acid polypeptide reads, in one-letter code: Large ribosomal subunit protein uL11 (141 aa).

Belongs to the universal ribosomal protein uL11 family. Part of the ribosomal stalk of the 50S ribosomal subunit. Interacts with L10 and the large rRNA to form the base of the stalk. L10 forms an elongated spine to which L12 dimers bind in a sequential fashion forming a multimeric L10(L12)X complex. In terms of processing, one or more lysine residues are methylated.

Its function is as follows. Forms part of the ribosomal stalk which helps the ribosome interact with GTP-bound translation factors. This Prochlorococcus marinus (strain MIT 9312) protein is Large ribosomal subunit protein uL11.